The chain runs to 357 residues: Outer membrane porin protein OmpD (357 aa).

The first 21 residues, 1 to 21 (MKLKLVAVAVTTLLAAGAVNA), serve as a signal peptide directing secretion.

Belongs to the Gram-negative porin family. In terms of assembly, homotrimer.

It is found in the cell outer membrane. In terms of biological role, forms pores that allow passive diffusion of small molecules across the outer membrane. This Citrobacter koseri (strain ATCC BAA-895 / CDC 4225-83 / SGSC4696) protein is Outer membrane porin protein OmpD (ompD).